A 217-amino-acid polypeptide reads, in one-letter code: Octanoyltransferase (217 aa).

Residues 32-207 enclose the BPL/LPL catalytic domain; it reads NDSPDELWIV…TLSQLLGYQH (176 aa). Substrate is bound by residues 71–78, 138–140, and 151–153; these read RGGQVTYH, SLG, and GLA. Cys-169 functions as the Acyl-thioester intermediate in the catalytic mechanism.

It belongs to the LipB family.

The protein localises to the cytoplasm. It carries out the reaction octanoyl-[ACP] + L-lysyl-[protein] = N(6)-octanoyl-L-lysyl-[protein] + holo-[ACP] + H(+). The protein operates within protein modification; protein lipoylation via endogenous pathway; protein N(6)-(lipoyl)lysine from octanoyl-[acyl-carrier-protein]: step 1/2. In terms of biological role, catalyzes the transfer of endogenously produced octanoic acid from octanoyl-acyl-carrier-protein onto the lipoyl domains of lipoate-dependent enzymes. Lipoyl-ACP can also act as a substrate although octanoyl-ACP is likely to be the physiological substrate. This Shewanella oneidensis (strain ATCC 700550 / JCM 31522 / CIP 106686 / LMG 19005 / NCIMB 14063 / MR-1) protein is Octanoyltransferase.